The chain runs to 426 residues: Histidine--tRNA ligase (426 aa).

The protein belongs to the class-II aminoacyl-tRNA synthetase family.

The protein resides in the cytoplasm. The enzyme catalyses tRNA(His) + L-histidine + ATP = L-histidyl-tRNA(His) + AMP + diphosphate + H(+). This chain is Histidine--tRNA ligase, found in Saccharolobus islandicus (strain L.S.2.15 / Lassen #1) (Sulfolobus islandicus).